The sequence spans 216 residues: MSKLQSEAVREAITTIKGKSEEKKRNFVETVELQIGLKNYDPQKDKRFSGSVKLPHIPRPKMKICMLGDAQHVEEAEKMGLSNMDVEALKKLNKNKKLVKKLAKSYHAFLASESVIKQIPRLLGPGLNKAGKFPTLVSHQESLEAKVNETKATVKFQLKKVLCMGVAVGNLSMEEKQLFQNVQMSVNFLVSLLKKNWQNVRCLYLKSTMGPPQRIF.

This sequence belongs to the universal ribosomal protein uL1 family. In terms of assembly, interacts with the GTPase NUG2.

The sequence is that of Large ribosomal subunit protein uL1y (RPL10AB) from Arabidopsis thaliana (Mouse-ear cress).